We begin with the raw amino-acid sequence, 171 residues long: Adenine phosphoribosyltransferase (171 aa).

This sequence belongs to the purine/pyrimidine phosphoribosyltransferase family. In terms of assembly, homodimer.

Its subcellular location is the cytoplasm. The catalysed reaction is AMP + diphosphate = 5-phospho-alpha-D-ribose 1-diphosphate + adenine. It functions in the pathway purine metabolism; AMP biosynthesis via salvage pathway; AMP from adenine: step 1/1. Functionally, catalyzes a salvage reaction resulting in the formation of AMP, that is energically less costly than de novo synthesis. The chain is Adenine phosphoribosyltransferase from Trichlorobacter lovleyi (strain ATCC BAA-1151 / DSM 17278 / SZ) (Geobacter lovleyi).